Consider the following 756-residue polypeptide: Phosphate transporter PHO1 homolog 6 (756 aa).

Positions Met-1–Lys-303 constitute an SPX domain. Residues Met-1–Thr-355 lie on the Cytoplasmic side of the membrane. The helical transmembrane segment at Phe-356–Val-376 threads the bilayer. The Extracellular portion of the chain corresponds to Arg-377–Pro-396. A helical transmembrane segment spans residues Leu-397 to Phe-417. Residues Trp-418–Lys-440 lie on the Cytoplasmic side of the membrane. Residues Gln-441–Leu-461 traverse the membrane as a helical segment. At Asp-462–Glu-477 the chain is on the extracellular side. The chain crosses the membrane as a helical span at residues Leu-478–Phe-498. Residues Tyr-499 to Arg-631 are Cytoplasmic-facing. Residues Lys-562 to His-756 form the EXS domain. A helical transmembrane segment spans residues Leu-632–Tyr-652. The Extracellular segment spans residues Asp-653–Glu-676. Residues Val-677–Leu-697 traverse the membrane as a helical segment. At Asp-698–His-756 the chain is on the cytoplasmic side.

The protein belongs to the SYG1 (TC 2.A.94) family. As to expression, specifically expressed in anther connective tissue.

The protein resides in the cell membrane. Functionally, may transport inorganic phosphate (Pi). The protein is Phosphate transporter PHO1 homolog 6 (PHO1-H6) of Arabidopsis thaliana (Mouse-ear cress).